Reading from the N-terminus, the 92-residue chain is Small ribosomal subunit protein bS20 (92 aa).

Disordered regions lie at residues 1–25 and 68–92; these read MALRHKSAQKRHRQSLKRRAINRAK and HKNAAARKKSRLAKAINKAKAAQQA. Low complexity predominate over residues 80-92; that stretch reads AKAINKAKAAQQA.

Belongs to the bacterial ribosomal protein bS20 family.

Its function is as follows. Binds directly to 16S ribosomal RNA. In Deinococcus radiodurans (strain ATCC 13939 / DSM 20539 / JCM 16871 / CCUG 27074 / LMG 4051 / NBRC 15346 / NCIMB 9279 / VKM B-1422 / R1), this protein is Small ribosomal subunit protein bS20.